The chain runs to 307 residues: Oxygen-dependent coproporphyrinogen-III oxidase (307 aa).

Serine 97 contributes to the substrate binding site. Histidine 101 and histidine 111 together coordinate a divalent metal cation. Histidine 111 acts as the Proton donor in catalysis. Position 113–115 (113–115 (NVR)) interacts with substrate. A divalent metal cation contacts are provided by histidine 152 and histidine 182. An important for dimerization region spans residues 247-282 (YVEFNLVWDRGTHFGLQSGGRTESILMSMPPLASWS). 265-267 (GGR) contacts substrate.

This sequence belongs to the aerobic coproporphyrinogen-III oxidase family. Homodimer. The cofactor is a divalent metal cation.

It localises to the cytoplasm. The catalysed reaction is coproporphyrinogen III + O2 + 2 H(+) = protoporphyrinogen IX + 2 CO2 + 2 H2O. Its pathway is porphyrin-containing compound metabolism; protoporphyrin-IX biosynthesis; protoporphyrinogen-IX from coproporphyrinogen-III (O2 route): step 1/1. In terms of biological role, involved in the heme biosynthesis. Catalyzes the aerobic oxidative decarboxylation of propionate groups of rings A and B of coproporphyrinogen-III to yield the vinyl groups in protoporphyrinogen-IX. The polypeptide is Oxygen-dependent coproporphyrinogen-III oxidase (Polaromonas naphthalenivorans (strain CJ2)).